The chain runs to 119 residues: Beta-2-microglobulin (119 aa).

The first 20 residues, 1–20 (MASSVVVALLVLLSLSGLEA), serve as a signal peptide directing secretion. In terms of domain architecture, Ig-like C1-type spans 25-114 (PKIQVYSRHP…VTFSTPKTVK (90 aa)). Cysteines 45 and 100 form a disulfide.

Belongs to the beta-2-microglobulin family. As to quaternary structure, heterodimer of an alpha chain and a beta chain. Beta-2-microglobulin is the beta-chain of major histocompatibility complex class I molecules.

It is found in the secreted. Component of the class I major histocompatibility complex (MHC). Involved in the presentation of peptide antigens to the immune system. The protein is Beta-2-microglobulin (B2M) of Callithrix aurita (White-eared marmoset).